Reading from the N-terminus, the 272-residue chain is Elongation factor Ts (272 aa).

The tract at residues 76–79 is involved in Mg(2+) ion dislocation from EF-Tu; sequence TDFV.

The protein belongs to the EF-Ts family.

Its subcellular location is the cytoplasm. Functionally, associates with the EF-Tu.GDP complex and induces the exchange of GDP to GTP. It remains bound to the aminoacyl-tRNA.EF-Tu.GTP complex up to the GTP hydrolysis stage on the ribosome. The protein is Elongation factor Ts of Corynebacterium jeikeium (strain K411).